Reading from the N-terminus, the 211-residue chain is Small ribosomal subunit protein uS3 (211 aa).

A KH type-2 domain is found at 38 to 106 (LRKFIKKAFY…NIELNIIEVK (69 aa)).

This sequence belongs to the universal ribosomal protein uS3 family. In terms of assembly, part of the 30S ribosomal subunit. Forms a tight complex with proteins S10 and S14.

Functionally, binds the lower part of the 30S subunit head. Binds mRNA in the 70S ribosome, positioning it for translation. In Ehrlichia ruminantium (strain Gardel), this protein is Small ribosomal subunit protein uS3.